The following is a 112-amino-acid chain: Carboxysome shell protein CcmK4 (112 aa).

The BMC domain occupies 6–92; it reads AVGSIETIGF…PHENVVAVLP (87 aa).

The protein belongs to the bacterial microcompartments protein family. CcmK subfamily. In terms of assembly, homohexamer. Interacts with full-length CcmM. Forms mixed heterohexamers with CcmK3, probably with 1:5 CcmK3:CcmK4 stoichiometry. Only very weak interactions with CcmK1 and CcmK2 were seen.

The protein resides in the carboxysome. A probably minor shell protein component of the carboxysome, a polyhedral inclusion where RuBisCO (ribulose bisphosphate carboxylase, rbcL-rbcS) is sequestered. The central pore probably regulates metabolite flux, as might the gaps between assembled homohexamers. Homohexamers make sheets that probably form the facets of the polyhedral carboxysome. This subunit probably makes both homohexamers and heterohexamers with CcmK3. The chain is Carboxysome shell protein CcmK4 from Synechocystis sp. (strain ATCC 27184 / PCC 6803 / Kazusa).